Here is a 1522-residue protein sequence, read N- to C-terminus: Lysophospholipase nte1 (1522 aa).

The tract at residues 1–24 (MADGVTQVDSTGLHSFSPSPSLSS) is disordered. The Cytoplasmic segment spans residues 1-65 (MADGVTQVDS…LPPVPTTMAG (65 aa)). Positions 15–24 (SFSPSPSLSS) are enriched in low complexity. A helical transmembrane segment spans residues 66–86 (WIGWVFSFFFQVIPSVLYWII). Over 87–108 (TFSTITLPTWLFTLFSMSLTFT) the chain is Lumenal. A helical transmembrane segment spans residues 109–129 (MNFTTLLLIVLAVVSTISWFI). The Cytoplasmic segment spans residues 130–1522 (RYRFLNMYSR…RTLAPRRASI (1393 aa)). Disordered stretches follow at residues 308–384 (VPNS…SVHP), 523–544 (RAATVVTPESAPAEHDTYGVSP), and 757–776 (TTTANSVGAGGTAANDSRRR). Positions 369 to 381 (ESRKHSSRKRRKS) are enriched in basic residues. Residues 680–800 (GGTS…AVAS) and 840–960 (RLTS…IAQR) contribute to the a nucleoside 3',5'-cyclic phosphate site. The region spanning 1219-1383 (LVLGGGGARG…IDNLTVDHMK (165 aa)) is the PNPLA domain. The GXGXXG signature appears at 1223-1228 (GGGARG). The short motif at 1250–1254 (GTSIG) is the GXSXG element. Ser-1252 (nucleophile) is an active-site residue. The active-site Proton acceptor is the Asp-1370. A DGA/G motif is present at residues 1370–1372 (DGG). The disordered stretch occupies residues 1501-1522 (LPEETEEKKKLQRTLAPRRASI).

This sequence belongs to the NTE family.

It localises to the endoplasmic reticulum membrane. The enzyme catalyses a 1-acyl-sn-glycero-3-phosphocholine + H2O = sn-glycerol 3-phosphocholine + a fatty acid + H(+). Inhibited by organophosphorus esters. Its function is as follows. Intracellular phospholipase B that catalyzes the double deacylation of phosphatidylcholine (PC) to glycerophosphocholine (GroPCho). Plays an important role in membrane lipid homeostasis. Responsible for the rapid PC turnover in response to inositol, elevated temperatures, or when choline is present in the growth medium. The polypeptide is Lysophospholipase nte1 (nte1) (Aspergillus fumigatus (strain ATCC MYA-4609 / CBS 101355 / FGSC A1100 / Af293) (Neosartorya fumigata)).